A 340-amino-acid chain; its full sequence is Ketol-acid reductoisomerase (NADP(+)) (340 aa).

One can recognise a KARI N-terminal Rossmann domain in the interval valine 3–threonine 183. NADP(+)-binding positions include phenylalanine 26–glutamine 29, serine 54, and aspartate 84–glutamine 87. Histidine 109 is a catalytic residue. Glycine 135 serves as a coordination point for NADP(+). The 146-residue stretch at threonine 184–isoleucine 329 folds into the KARI C-terminal knotted domain. 4 residues coordinate Mg(2+): aspartate 192, glutamate 196, glutamate 228, and glutamate 232. Serine 253 contributes to the substrate binding site.

This sequence belongs to the ketol-acid reductoisomerase family. It depends on Mg(2+) as a cofactor.

It carries out the reaction (2R)-2,3-dihydroxy-3-methylbutanoate + NADP(+) = (2S)-2-acetolactate + NADPH + H(+). It catalyses the reaction (2R,3R)-2,3-dihydroxy-3-methylpentanoate + NADP(+) = (S)-2-ethyl-2-hydroxy-3-oxobutanoate + NADPH + H(+). The protein operates within amino-acid biosynthesis; L-isoleucine biosynthesis; L-isoleucine from 2-oxobutanoate: step 2/4. It participates in amino-acid biosynthesis; L-valine biosynthesis; L-valine from pyruvate: step 2/4. Functionally, involved in the biosynthesis of branched-chain amino acids (BCAA). Catalyzes an alkyl-migration followed by a ketol-acid reduction of (S)-2-acetolactate (S2AL) to yield (R)-2,3-dihydroxy-isovalerate. In the isomerase reaction, S2AL is rearranged via a Mg-dependent methyl migration to produce 3-hydroxy-3-methyl-2-ketobutyrate (HMKB). In the reductase reaction, this 2-ketoacid undergoes a metal-dependent reduction by NADPH to yield (R)-2,3-dihydroxy-isovalerate. This Campylobacter curvus (strain 525.92) protein is Ketol-acid reductoisomerase (NADP(+)).